Consider the following 189-residue polypeptide: Frataxin-like protein, mitochondrial (189 aa).

A mitochondrion-targeting transit peptide spans Met1–Ala50.

Belongs to the frataxin family. As to quaternary structure, interacts with IscU; the interaction is direct.

The protein localises to the mitochondrion. It catalyses the reaction 4 Fe(2+) + O2 + 4 H(+) = 4 Fe(3+) + 2 H2O. Iron-binding protein which binds 2 iron atoms per monomer. Probably, acts as an iron carrier for the biosynthesis of Fe-S clusters. Stimulates the cysteine desulphurase activity of IscS in the presence of IscU. The protein is Frataxin-like protein, mitochondrial of Leishmania donovani.